A 552-amino-acid polypeptide reads, in one-letter code: N-acetylglucosamine-6-sulfatase (552 aa).

The first 36 residues, 1–36, serve as a signal peptide directing secretion; the sequence is MRLLPLAPGRLRRGSPRHLPSCSPALLLLVLGGCLG. Residues Asp55, Asp56, and Cys91 each contribute to the Ca(2+) site. Cys91 acts as the Nucleophile in catalysis. At Cys91 the chain carries 3-oxoalanine (Cys). Asn111, Asn117, Asn183, Asn198, Asn210, Asn279, and Asn317 each carry an N-linked (GlcNAc...) asparagine glycan. Ca(2+)-binding residues include Asp326 and Asn327. 6 N-linked (GlcNAc...) asparagine glycosylation sites follow: Asn362, Asn387, Asn405, Asn422, Asn449, and Asn480. Ser541 is subject to Phosphoserine.

The protein belongs to the sulfatase family. Requires Ca(2+) as cofactor. Post-translationally, the form A (78 kDa) is processed by internal peptidase cleavage to a 32 kDa N-terminal species (form B) and a 48 kDa C-terminal species. The conversion to 3-oxoalanine (also known as C-formylglycine, FGly), of a serine or cysteine residue in prokaryotes and of a cysteine residue in eukaryotes, is critical for catalytic activity.

Its subcellular location is the lysosome. It catalyses the reaction Hydrolysis of the 6-sulfate groups of the N-acetyl-D-glucosamine 6-sulfate units of heparan sulfate and keratan sulfate.. Its function is as follows. Hydrolyzes 6-sulfate groups in N-acetyl-d-glucosaminide units of heparin sulfate and keratan sulfate. The chain is N-acetylglucosamine-6-sulfatase (GNS) from Homo sapiens (Human).